Here is a 506-residue protein sequence, read N- to C-terminus: Bifunctional purine biosynthesis protein PurH (506 aa).

One can recognise an MGS-like domain in the interval 1–146 (MARLALLSVS…KNFAHLTVLC (146 aa)).

Belongs to the PurH family.

The enzyme catalyses (6R)-10-formyltetrahydrofolate + 5-amino-1-(5-phospho-beta-D-ribosyl)imidazole-4-carboxamide = 5-formamido-1-(5-phospho-D-ribosyl)imidazole-4-carboxamide + (6S)-5,6,7,8-tetrahydrofolate. It catalyses the reaction IMP + H2O = 5-formamido-1-(5-phospho-D-ribosyl)imidazole-4-carboxamide. The protein operates within purine metabolism; IMP biosynthesis via de novo pathway; 5-formamido-1-(5-phospho-D-ribosyl)imidazole-4-carboxamide from 5-amino-1-(5-phospho-D-ribosyl)imidazole-4-carboxamide (10-formyl THF route): step 1/1. It participates in purine metabolism; IMP biosynthesis via de novo pathway; IMP from 5-formamido-1-(5-phospho-D-ribosyl)imidazole-4-carboxamide: step 1/1. This chain is Bifunctional purine biosynthesis protein PurH, found in Nostoc sp. (strain PCC 7120 / SAG 25.82 / UTEX 2576).